We begin with the raw amino-acid sequence, 83 residues long: Turripeptide Lol11.1 (83 aa).

An N-terminal signal peptide occupies residues 1 to 27; the sequence is MARQMMTVGCLILIVVLLDMMVPVFNT.

This sequence belongs to the conopeptide I2-like superfamily. Post-translationally, contains 4 disulfide bonds. In terms of tissue distribution, expressed by the venom duct.

Its subcellular location is the secreted. Its function is as follows. Acts as a neurotoxin by inhibiting voltage-gated potassium channels (Kv). The chain is Turripeptide Lol11.1 from Iotyrris olangoensis (Sea snail).